A 257-amino-acid chain; its full sequence is Phosphonates import ATP-binding protein PhnC (257 aa).

The 245-residue stretch at 4–248 folds into the ABC transporter domain; that stretch reads IEFKDVRKVY…AFNEIYGRSI (245 aa). Residue 37–44 participates in ATP binding; that stretch reads GLSGSGKS.

Belongs to the ABC transporter superfamily. Phosphonates importer (TC 3.A.1.9.1) family. As to quaternary structure, the complex is composed of two ATP-binding proteins (PhnC), two transmembrane proteins (PhnE) and a solute-binding protein (PhnD).

Its subcellular location is the cell membrane. It catalyses the reaction phosphonate(out) + ATP + H2O = phosphonate(in) + ADP + phosphate + H(+). In terms of biological role, part of the ABC transporter complex PhnCDE involved in phosphonates import. Responsible for energy coupling to the transport system. The protein is Phosphonates import ATP-binding protein PhnC of Staphylococcus saprophyticus subsp. saprophyticus (strain ATCC 15305 / DSM 20229 / NCIMB 8711 / NCTC 7292 / S-41).